The following is a 447-amino-acid chain: Folate synthesis bifunctional protein (447 aa).

The segment at 1–165 (MTTAQFICLS…SFGEIAHLLP (165 aa)) is HPPK. Residues 179 to 438 (TLLMGVVNVT…DVEANQRVLS (260 aa)) form the Pterin-binding domain. The segment at 181–447 (LMGVVNVTDN…SAAAWSGVHV (267 aa)) is DHPS. Mg(2+) is bound at residue N186. Residues T226, D266, N286, D356, K392, and 426–428 (RVH) each bind (7,8-dihydropterin-6-yl)methyl diphosphate.

The protein in the C-terminal section; belongs to the DHPS family. It in the N-terminal section; belongs to the HPPK family. Mg(2+) is required as a cofactor.

The catalysed reaction is 6-hydroxymethyl-7,8-dihydropterin + ATP = (7,8-dihydropterin-6-yl)methyl diphosphate + AMP + H(+). The enzyme catalyses (7,8-dihydropterin-6-yl)methyl diphosphate + 4-aminobenzoate = 7,8-dihydropteroate + diphosphate. Its pathway is cofactor biosynthesis; tetrahydrofolate biosynthesis; 2-amino-4-hydroxy-6-hydroxymethyl-7,8-dihydropteridine diphosphate from 7,8-dihydroneopterin triphosphate: step 4/4. It functions in the pathway cofactor biosynthesis; tetrahydrofolate biosynthesis; 7,8-dihydrofolate from 2-amino-4-hydroxy-6-hydroxymethyl-7,8-dihydropteridine diphosphate and 4-aminobenzoate: step 1/2. The chain is Folate synthesis bifunctional protein (folKP) from Chlamydia caviae (strain ATCC VR-813 / DSM 19441 / 03DC25 / GPIC) (Chlamydophila caviae).